Here is a 162-residue protein sequence, read N- to C-terminus: Transcription elongation factor GreA (162 aa).

Residues Met-1 to Val-28 are a coiled coil.

This sequence belongs to the GreA/GreB family.

In terms of biological role, necessary for efficient RNA polymerase transcription elongation past template-encoded arresting sites. The arresting sites in DNA have the property of trapping a certain fraction of elongating RNA polymerases that pass through, resulting in locked ternary complexes. Cleavage of the nascent transcript by cleavage factors such as GreA or GreB allows the resumption of elongation from the new 3'terminus. GreA releases sequences of 2 to 3 nucleotides. The chain is Transcription elongation factor GreA from Sulfurovum sp. (strain NBC37-1).